We begin with the raw amino-acid sequence, 1208 residues long: MSLREVTNYEVSFYIPLSYSNRTHKVCKLPNGILALIISDPTDTSSSCSLTVCTGSHNDPKDIAGLAHLCEHMILSAGSKKYPDPGLFHTLIAKNNGSQNAFTTGEQTTFYFELPNTQNNGEFTFESILDVFASFFKEPLFNPLLISKEIYAIQSEHEGNISSTTKIFYHAARILANPDHPFSRFSTGNIHSLSSIPQLKKIKLKSSLNTYFENNFFGENITLCIRGPQSVNILTKLALSKFGDIKPKSAVKERSISIRTRSFRRSKSLKKRQDSSKNDYSDLKTFKILNTTWEKKYKNTMCFQQFPECNSIFINSNKVPIMRLLFPVSDKNTRFTKDDIKIYSHLWCELFGDESPGSLSYYLASKGWLTGCFAFTSEFAIGDIGLILELELTNSGWENIKRITTIVLNRLLPSFYVMNIDYLITFLKEQNLIDLVSFLYQSSEDLPMEECSKLSGILQDDLECLTPPNIFKGFKSLIEIDDPNIEKYENTKANIQWWTGQAIKFQNFLKSFMNHDNMRLLLLGNIKSGNIFDKMKNKSDICTDFFYEFEYYTANVHLASDNKFHSNSSYEFNFPTGNLFLPDCVSDPLKLQQLFLECSLKSKFATLRPQIYSEPTRTKPQLVSENQNYEMWILKEDPNFASDNKSVVSFEVLGLGIKPSPEATIHLEVLAQALFIITSSFLYPALRIGYTYEIASSSKGNVTLRFTISGFPEGVFTIVKTFVDTLKLIATDPTFLSKDTLRKARILVRNKYKNASSDNCVKLASVGLLIVLEKYIWTLEDRINALELTELESFEKFCFLFWRNPKHLVLFMQGSLEYADAINRYLNNNFTQHLKISNEGSKPTIRLYPPPSTKDLDQGTNAFISYNGHQDDPNNSIVYFIQTAQRDDIKNLTLTFLTEYLFSLTLVPDLRNKKQIGYIVLGGLRVLTDTVGIHITVMSGSSGHNLETRINEYLSYLQLQVLNRFTEFDFRRILLEPFLNLLKQNSTKQFEGSAGPVDLLNEIVANVQNGDNYTLNNKQMRQHRKVRNKIAEGRLNFQEDHEMIDISFLQKLTLKKYLAFFESKISIYSAQRSKLSIMITSPMAEKEIASRKMFLQLEAFLKINGFAIKNEDLKKIVEHSKGNPILLVKNLFTYFRRRNEVFKLGTVVLQEILKIIGMNLKQRYGSILGFSSQDGEGQEIEKFWNNDTSPIVPLQELPEPNFFRKAAF.

His68 contacts Zn(2+). Glu71 (proton acceptor) is an active-site residue. Zn(2+)-binding residues include His72 and Glu156. The residue at position 262 (Ser262) is a Phosphoserine.

It belongs to the peptidase M16 family. Interacts with BUD5. It depends on Zn(2+) as a cofactor.

It is found in the bud neck. In terms of biological role, probable protease. Involved in axial budding. This is Putative protease AXL1 (AXL1) from Saccharomyces cerevisiae (strain ATCC 204508 / S288c) (Baker's yeast).